Here is a 363-residue protein sequence, read N- to C-terminus: MGFKCGIVGLPNVGKSTLFNALTKAGIEAANYPFCTIEPNTGVVPMPDPRLDALAEIVKPERILPTTMEFVDIAGLVAGASKGEGLGNKFLANIRETDAIGHVVRCFENDDIVHVAGKIDPLDDIDTINTELALADLDSCERAIQRLQKRAKGGDKEAKFELSVMEKILPVLENAGMIRSVGLDKEELQAIKSYNFLTLKPTMYIANVNEDGFENNPYLDRVREIAAKEGAVVVPVCAAIESEIAELDDEEKVEFLQDLGIEEPGLNRVIRAGYALLNLQTYFTAGVKEVRAWTVSVGATAPKAAAVIHTDFEKGFIRAEVIAYEDFIQFNGENGAKEAGKWRLEGKDYIVQDGDVMHFRFNV.

One can recognise an OBG-type G domain in the interval 3–256 (FKCGIVGLPN…LDDEEKVEFL (254 aa)). 12–17 (NVGKST) provides a ligand contact to ATP. The Mg(2+) site is built by S16 and T36. The 84-residue stretch at 278–361 (NLQTYFTAGV…QDGDVMHFRF (84 aa)) folds into the TGS domain.

The cofactor is Mg(2+).

Functionally, ATPase that binds to both the 70S ribosome and the 50S ribosomal subunit in a nucleotide-independent manner. Does not hydrolyze GTP. The sequence is that of Ribosome-binding ATPase YchF from Haemophilus influenzae (strain ATCC 51907 / DSM 11121 / KW20 / Rd).